The following is a 101-amino-acid chain: Small ribosomal subunit protein uS14 (101 aa).

Belongs to the universal ribosomal protein uS14 family. In terms of assembly, part of the 30S ribosomal subunit. Contacts proteins S3 and S10.

Binds 16S rRNA, required for the assembly of 30S particles and may also be responsible for determining the conformation of the 16S rRNA at the A site. The polypeptide is Small ribosomal subunit protein uS14 (Shewanella sp. (strain MR-4)).